An 85-amino-acid polypeptide reads, in one-letter code: Large ribosomal subunit protein bL27 (85 aa).

The disordered stretch occupies residues 1-21 (MAHKKGGGTTRNGRDSESKRL).

The protein belongs to the bacterial ribosomal protein bL27 family.

This is Large ribosomal subunit protein bL27 from Janthinobacterium sp. (strain Marseille) (Minibacterium massiliensis).